The primary structure comprises 250 residues: tRNA (guanine-N(1)-)-methyltransferase (250 aa).

S-adenosyl-L-methionine is bound by residues glycine 113 and isoleucine 134–leucine 139.

This sequence belongs to the RNA methyltransferase TrmD family. In terms of assembly, homodimer.

The protein resides in the cytoplasm. It carries out the reaction guanosine(37) in tRNA + S-adenosyl-L-methionine = N(1)-methylguanosine(37) in tRNA + S-adenosyl-L-homocysteine + H(+). In terms of biological role, specifically methylates guanosine-37 in various tRNAs. The protein is tRNA (guanine-N(1)-)-methyltransferase of Buchnera aphidicola subsp. Baizongia pistaciae (strain Bp).